The primary structure comprises 335 residues: ETS translocation variant 2 (335 aa).

Disordered stretches follow at residues 94 to 138 and 201 to 220; these read DPWS…SWSH and GHQS…SDRA. Polar residues predominate over residues 205–220; sequence PAFTTPSKSNKQSDRA. Residues 234-314 constitute a DNA-binding region (ETS); that stretch reads IQLWQFLLEL…GGRKYTYRFG (81 aa).

Belongs to the ETS family. Testis.

The protein resides in the nucleus. Binds to DNA sequences containing the consensus pentanucleotide 5'-CGGA[AT]-3'. This is ETS translocation variant 2 (Etv2) from Mus musculus (Mouse).